The sequence spans 650 residues: MIEENKHFEKKMQEYDASQIQVLEGLEAVRMRPGMYIGSTAKEGLHHLVWEIVDNSIDEALAGFASHIKVFIEADNSITVVDDGRGIPVDIQVKTGRPAVETVFTVLHAGGKFGGGSYKVSGGLHGVGSSVVNALSTQLDVRVYKNGQIHYQEFKRGAVVADLEVIGTTDVTGTTVHFTPDPEIFTETTQFDYSVLAKRIQELAFLNRGLKISITDKRSGMEQEEHFHYEGGIGSYVEFLNDKKDVIFETPIYTDGELEGIAVEVAMQYTTSYQETVMSFANNIHTHEGGTHEQGFRAALTRVINDYAKKNKILKENEDNLTGEDVREGLTAVISVKHPNPQFEGQTKTKLGNSEVVKITNRLFSEAFQRFLLENPQVARKIVEKGILASKARIAAKRAREVTRKKSGLEISNLPGKLADCSSNDANQNELFIVEGDSAGGSAKSGRNREFQAILPIRGKILNVEKATMDKILANEEIRSLFTAMGTGFGADFDVSKARYQKLVIMTDADVDGAHIRTLLLTLIYRFMRPVLEAGYVYIAQPPIYGVKVGSEIKEYIQPGIDQEDQLKTALEKYSIGRSKPTVQRYKGLGEMDDHQLWETTMDPENRLMARVTVDDAAEADKVFDMLMGDRVEPRRDFIEENAVYSTLDI.

In terms of domain architecture, Toprim spans 429–543; it reads NELFIVEGDS…AGYVYIAQPP (115 aa). Mg(2+)-binding residues include glutamate 435, aspartate 508, and aspartate 510.

The protein belongs to the type II topoisomerase GyrB family. In terms of assembly, heterotetramer, composed of two GyrA and two GyrB chains. In the heterotetramer, GyrA contains the active site tyrosine that forms a transient covalent intermediate with DNA, while GyrB binds cofactors and catalyzes ATP hydrolysis. Mg(2+) serves as cofactor. The cofactor is Mn(2+). Ca(2+) is required as a cofactor.

The protein localises to the cytoplasm. It carries out the reaction ATP-dependent breakage, passage and rejoining of double-stranded DNA.. Functionally, a type II topoisomerase that negatively supercoils closed circular double-stranded (ds) DNA in an ATP-dependent manner to modulate DNA topology and maintain chromosomes in an underwound state. Negative supercoiling favors strand separation, and DNA replication, transcription, recombination and repair, all of which involve strand separation. Also able to catalyze the interconversion of other topological isomers of dsDNA rings, including catenanes and knotted rings. Type II topoisomerases break and join 2 DNA strands simultaneously in an ATP-dependent manner. In Streptococcus pyogenes serotype M3 (strain ATCC BAA-595 / MGAS315), this protein is DNA gyrase subunit B.